Here is a 677-residue protein sequence, read N- to C-terminus: NADPH--cytochrome P450 reductase (677 aa).

Gly2 is subject to N-acetylglycine. Over 2–21 the chain is Lumenal; sequence GDSHVDTSSTVSEAVAEEVS. The chain crosses the membrane as a helical span at residues 22–42; sequence LFSMTDMILFSLIVGLLTYWF. The Cytoplasmic portion of the chain corresponds to 43 to 677; sequence LFRKKKEEVP…KGRYSLDVWS (635 aa). Ser63 bears the Phosphoserine mark. A Flavodoxin-like domain is found at 80 to 224; the sequence is IIVFYGSQTG…DFITWREQFW (145 aa). FMN-binding positions include 86–91, 138–141, 173–182, and Asp208; these read SQTGTA, ATYG, and LGNKTYEHFN. The region spanning 279–521 is the FAD-binding FR-type domain; sequence KNPFLAAVTT…FVRKSQFRLP (243 aa). An NADP(+)-binding site is contributed by Arg298. Residues Arg424, 454 to 457, 472 to 474, Tyr478, and 488 to 491 each bind FAD; these read RYYS, CAV, and GVAT. Residues Thr535, 596-597, 602-606, and Asp638 contribute to the NADP(+) site; these read SR and KVYVQ. Residue Trp676 coordinates FAD.

Belongs to the NADPH--cytochrome P450 reductase family. This sequence in the N-terminal section; belongs to the flavodoxin family. It in the C-terminal section; belongs to the flavoprotein pyridine nucleotide cytochrome reductase family. FAD serves as cofactor. It depends on FMN as a cofactor.

Its subcellular location is the endoplasmic reticulum membrane. The catalysed reaction is 2 oxidized [cytochrome P450] + NADPH = 2 reduced [cytochrome P450] + NADP(+) + H(+). This enzyme is required for electron transfer from NADP to cytochrome P450 in microsomes. It can also provide electron transfer to heme oxygenase and cytochrome B5. In Homo sapiens (Human), this protein is NADPH--cytochrome P450 reductase.